A 205-amino-acid polypeptide reads, in one-letter code: Holliday junction branch migration complex subunit RuvA (205 aa).

The interval 1-64 (MIGRLRGVLI…EDAQLLYGFI (64 aa)) is domain I. The tract at residues 65 to 143 (TKQERSLFRL…SLMEASVGSE (79 aa)) is domain II. The segment at 144–156 (REFVLQSNYSPAP) is flexible linker. The domain III stretch occupies residues 157–205 (TVNSAEEDAISALISLGYKPPQASKAVSAAYKEGMDSETLIKAALKSML).

It belongs to the RuvA family. Homotetramer. Forms an RuvA(8)-RuvB(12)-Holliday junction (HJ) complex. HJ DNA is sandwiched between 2 RuvA tetramers; dsDNA enters through RuvA and exits via RuvB. An RuvB hexamer assembles on each DNA strand where it exits the tetramer. Each RuvB hexamer is contacted by two RuvA subunits (via domain III) on 2 adjacent RuvB subunits; this complex drives branch migration. In the full resolvosome a probable DNA-RuvA(4)-RuvB(12)-RuvC(2) complex forms which resolves the HJ.

Its subcellular location is the cytoplasm. Functionally, the RuvA-RuvB-RuvC complex processes Holliday junction (HJ) DNA during genetic recombination and DNA repair, while the RuvA-RuvB complex plays an important role in the rescue of blocked DNA replication forks via replication fork reversal (RFR). RuvA specifically binds to HJ cruciform DNA, conferring on it an open structure. The RuvB hexamer acts as an ATP-dependent pump, pulling dsDNA into and through the RuvAB complex. HJ branch migration allows RuvC to scan DNA until it finds its consensus sequence, where it cleaves and resolves the cruciform DNA. The polypeptide is Holliday junction branch migration complex subunit RuvA (Shewanella sp. (strain MR-7)).